The following is a 254-amino-acid chain: Mitochondrial inner membrane protease ATP23 homolog (254 aa).

Residues 1–32 (MAQSGAKAADLSREPPGEQKPSPSSRQNEEDL) form a disordered region. His133 lines the a divalent metal cation pocket. Residue Glu134 is part of the active site. His137 contacts a divalent metal cation.

This sequence belongs to the peptidase M76 family.

This Danio rerio (Zebrafish) protein is Mitochondrial inner membrane protease ATP23 homolog (atp23).